Consider the following 89-residue polypeptide: UPF0223 protein BCB4264_A4064 (89 aa).

This sequence belongs to the UPF0223 family.

This chain is UPF0223 protein BCB4264_A4064, found in Bacillus cereus (strain B4264).